Here is a 387-residue protein sequence, read N- to C-terminus: Phosphoglycerate kinase (387 aa).

Substrate is bound by residues 21–23 (DLN), R36, 59–62 (HLGR), R113, and R146. Residues K197, E314, and 340 to 343 (GGDT) contribute to the ATP site.

This sequence belongs to the phosphoglycerate kinase family. In terms of assembly, monomer.

It localises to the cytoplasm. It catalyses the reaction (2R)-3-phosphoglycerate + ATP = (2R)-3-phospho-glyceroyl phosphate + ADP. It participates in carbohydrate degradation; glycolysis; pyruvate from D-glyceraldehyde 3-phosphate: step 2/5. This is Phosphoglycerate kinase from Pseudomonas syringae pv. syringae (strain B728a).